The primary structure comprises 139 residues: Small ribosomal subunit protein uS12 (139 aa).

Disordered stretches follow at residues 1 to 22 and 37 to 57; these read MPTI…SKSP and KTPS…TPKK. Basic residues predominate over residues 9-19; sequence RKGRKSHKGKS. Asp-102 bears the 3-methylthioaspartic acid mark.

It belongs to the universal ribosomal protein uS12 family. In terms of assembly, part of the 30S ribosomal subunit. Contacts proteins S8 and S17. May interact with IF1 in the 30S initiation complex.

With S4 and S5 plays an important role in translational accuracy. Its function is as follows. Interacts with and stabilizes bases of the 16S rRNA that are involved in tRNA selection in the A site and with the mRNA backbone. Located at the interface of the 30S and 50S subunits, it traverses the body of the 30S subunit contacting proteins on the other side and probably holding the rRNA structure together. The combined cluster of proteins S8, S12 and S17 appears to hold together the shoulder and platform of the 30S subunit. This chain is Small ribosomal subunit protein uS12, found in Limosilactobacillus reuteri (strain DSM 20016) (Lactobacillus reuteri).